Consider the following 347-residue polypeptide: Methionine import ATP-binding protein MetN (347 aa).

The 246-residue stretch at 2–247 (ITTTGLTKVY…PGSELASALF (246 aa)) folds into the ABC transporter domain. 38–45 (GQSGAGKS) is an ATP binding site.

Belongs to the ABC transporter superfamily. Methionine importer (TC 3.A.1.24) family. As to quaternary structure, the complex is composed of two ATP-binding proteins (MetN), two transmembrane proteins (MetI) and a solute-binding protein (MetQ).

The protein localises to the cell membrane. It catalyses the reaction L-methionine(out) + ATP + H2O = L-methionine(in) + ADP + phosphate + H(+). It carries out the reaction D-methionine(out) + ATP + H2O = D-methionine(in) + ADP + phosphate + H(+). Functionally, part of the ABC transporter complex MetNIQ involved in methionine import. Responsible for energy coupling to the transport system. This chain is Methionine import ATP-binding protein MetN, found in Streptomyces avermitilis (strain ATCC 31267 / DSM 46492 / JCM 5070 / NBRC 14893 / NCIMB 12804 / NRRL 8165 / MA-4680).